The sequence spans 506 residues: Acetaldehyde dehydrogenase (506 aa).

Active-site residues include Glu-262 and Cys-301.

The protein belongs to the aldehyde dehydrogenase family.

The enzyme catalyses acetaldehyde + NAD(+) + H2O = acetate + NADH + 2 H(+). Its pathway is alcohol metabolism; ethanol degradation; acetate from ethanol: step 2/2. In terms of biological role, catalyzes the NAD(+)-dependent oxidation of acetaldehyde to acetate. Is likely a component of the ethanol oxidation system that allows P.aeruginosa to grow on ethanol as the sole carbon and energy source. The protein is Acetaldehyde dehydrogenase of Pseudomonas aeruginosa.